Consider the following 932-residue polypeptide: Isoleucine--tRNA ligase (932 aa).

Residues 58–68 (PYANGDIHIGH) carry the 'HIGH' region motif. Residue glutamate 570 coordinates L-isoleucyl-5'-AMP. Residues 611-615 (KMSKS) carry the 'KMSKS' region motif. Lysine 614 serves as a coordination point for ATP. 4 residues coordinate Zn(2+): cysteine 895, cysteine 898, cysteine 915, and cysteine 918.

Belongs to the class-I aminoacyl-tRNA synthetase family. IleS type 1 subfamily. As to quaternary structure, monomer. Zn(2+) is required as a cofactor.

The protein localises to the cytoplasm. It carries out the reaction tRNA(Ile) + L-isoleucine + ATP = L-isoleucyl-tRNA(Ile) + AMP + diphosphate. In terms of biological role, catalyzes the attachment of isoleucine to tRNA(Ile). As IleRS can inadvertently accommodate and process structurally similar amino acids such as valine, to avoid such errors it has two additional distinct tRNA(Ile)-dependent editing activities. One activity is designated as 'pretransfer' editing and involves the hydrolysis of activated Val-AMP. The other activity is designated 'posttransfer' editing and involves deacylation of mischarged Val-tRNA(Ile). This is Isoleucine--tRNA ligase from Dechloromonas aromatica (strain RCB).